A 1704-amino-acid chain; its full sequence is MASPIIQPAGAGIHDIFTQLELWESIDKGLSMITILRDNDVLWKPFLQLTLFNQLNIVRKAWSATIQKASESDKVPTLKDVYTSESSFIAQALLDTKNLQITPPATPRTALSGALLAKTIVIFHHSERAQEELGTELPEEVRSLVNQNAICLKVLYNANQWHIDLHYKRDSLSSAQAGEVAEIFEQYLEEALEAVASAIPPSPPVEDDNAGHGGLCKERTDCPKVNRCIHDLIEEQAIARPDQEGICAYDGSLSYAGLSKLSSVLAEQLKTFGARPEQRVAILMNKSFWYPVVVLAVLKSGAAFVPLDPSHPKNRLKQLISEIEPCALITTSVLSELADDLGCPSLAIDSDLTRSKEGSTTALLPNTSASPNNAAYIIFTSGSTGKPKGVVVEHSALSTSAITRGVVLGLGPDSRVLQYAPHTFDVSVDEILTTLIHGGCVCVPSEDDRFSIAHFMESARVTVALLTPTSARTLHPDEVPSLRILQTGGEVLTEDVNDKWSNRVTLFNVYGPTEASVACVISNRTGLKGAGHVLGQAVGGKLWIVDPDDIERHLPDNEVGELVISGAILARGYFRDPSRTESSFVRMRNGERVYRTGDLASMDSAGTIIYHGRKDLEVKIRGQRINIAEIEIAILQCDLVHSVVVEYPRSGLFEKKLVAVLRFEDSSSDAEDGLFGGAKGLTEDIYCLLLSHVSSVLTPAMIPSKWLSLPCVPQMPSGKADRKQVRGWLEDMDKRTYTRIFHPNGTDNLISDPSDSMVAIWLKVLKLEPQSLRLDQSFIRNGGDSIMAMEARHQAHEAGINIDVRELLGSRALQEIGEMATKTSAVEEVSKIEDDRDEPFPLSPVQQMYFDKVSDPSLGLQQRVCVEIMTKIQPDMLREALNHVIQKHRMLAARFTKHMGQWMQQVPFGKNLKHLSRCHIYSQAVGSLGDFCSEPMALEDGTLLHAHLQSSGERQTLVLCVHHLVVDFVSWRVILQDLHDALAAAQNGLPSGISRSTLTFQQWCREQTKYASTLIPEAVLPFAPGPVNLRFWQPSNVQAVSNTYSEIVQHDFRLSSTQTTQMLEKFTTATVHPTDLMLATFALAFKRIFTERDTPTIFIEGHGREPWHASLDVSQTVGWFTAAFPIHLPKDTLLNTTTAILGASERRRSVLANGHPYWACRYLSPNGQKVFGDDPRHQEMEFVFNYAGSIVQRAPGQTLFAENVRIAEIGHPNCERFSLFDIGAAIEMPSSELVVSFTFPKGIAHRERVAELVKTYQELLETAVERDLDLSAKLSSPLVCPADVVRSLEVNGVCIERDVEIVYTPSSIQQHMLWRQSQEPWFYRVQGDWTIEKTTTQSEPVDIDRLSHAWNQVVHRHTTLRTVFRYSSEEERFVAIVLHEVKPAISIIRKGIQTSGSLCRDDDLSPPHRMVLREKDNGSVVCELEFSHTIIDAASRSIVVQDLLDAYDGKLAHRPLDFPPFWEYIRLAQSSTPSARKEELHRAGRVVTLPFQPTHVLSKVPEACKKNEITISSFFMTAWSIVLAKHFVAHNQRVDSTSSQAVAFDYVLSDRSANIPGIESAVGPYIRLPTLETHVKEGVSLKNIARGLHAQCTFQSLSQSTQDGSSLELPSKATALQKYSTLVNIRNSGSDSLDLVSDSGEWKWILQGFSDPWDYDLVFAVNVHAGKVTGWTVEYADGVVEHSAADEIAKDLNDVVERMVCEII.

The adenylation stretch occupies residues 234-620; the sequence is EEQAIARPDQ…HGRKDLEVKI (387 aa). One can recognise a Carrier domain in the interval 748–827; it reads NLISDPSDSM…EMATKTSAVE (80 aa). O-(pantetheine 4'-phosphoryl)serine is present on Ser-785. Residues 840 to 1266 form an epimerization (E) domain region; sequence FPLSPVQQMY…QELLETAVER (427 aa). Residues 1325–1477 form a condensation region; the sequence is VQGDWTIEKT…AQSSTPSARK (153 aa).

Belongs to the NRP synthetase family.

The enzyme catalyses L-tryptophan + ATP + H2O = D-tryptophan + AMP + diphosphate + H(+). It participates in pigment biosynthesis. In terms of biological role, nonribosomal peptide synthetase; part of the pathway that mediates the biosynthesis of the gray-brown conidiophore pigment. The first step of the pathway is performed by the nonribosomal peptide synthetase ivoA that catalyzes ATP-dependent unidirectional stereoinversion of L-tryptophan to D-tryptophan with complete conversion. While the stereoinversion is catalyzed by the epimerization (E) domain of ivoA, the terminal condensation (C) domain stereoselectively hydrolyzes D-tryptophanyl-S-phosphopantetheine thioester and thus represents a non-canonical C domain function. D-tryptophan is acetylated, probably by an endogenous acetyltransferase. N-acetyltryptophan is further 6-hydroxylated into N-acetyl-6-hydroxytryptophan (AHT) by the cytochrome P450 monooxygenase ivoC. N-acetyl-6-hydroxytryptophan is substrate of the N-acetyl-6-hydroxytryptophan oxidase ivoB to produce the gray-brown conidiophore pigment. This Emericella nidulans (strain FGSC A4 / ATCC 38163 / CBS 112.46 / NRRL 194 / M139) (Aspergillus nidulans) protein is Nonribosomal peptide synthetase ivoA.